Reading from the N-terminus, the 986-residue chain is Ephrin type-A receptor 4 (986 aa).

The first 19 residues, 1 to 19 (MAGIFYFILFSFLFGICDA), serve as a signal peptide directing secretion. At 20–547 (VTGSRVYPAN…RIIGDGANST (528 aa)) the chain is on the extracellular side. An Eph LBD domain is found at 30–209 (EVTLLDSRSV…FYKKCPLTVR (180 aa)). N-linked (GlcNAc...) asparagine glycans are attached at residues Asn235, Asn340, and Asn408. Fibronectin type-III domains lie at 328-439 (PPSA…TNQA) and 440-537 (APSS…TVPS). Residues 548–569 (VLLVSVSGSVVLVVILIAAFVI) form a helical membrane-spanning segment. The Cytoplasmic portion of the chain corresponds to 570–986 (SRRRSKYSKA…QQMHGRMVPV (417 aa)). Phosphotyrosine; by autocatalysis occurs at positions 596 and 602. One can recognise a Protein kinase domain in the interval 621-882 (IKIEKVIGVG…QIVNMLDKLI (262 aa)). ATP is bound by residues 627 to 635 (IGVGEFGEV) and Lys653. Residue Asp746 is the Proton acceptor of the active site. Residues Tyr779 and Tyr928 each carry the phosphotyrosine; by autocatalysis modification. The SAM domain maps to 911-975 (SAVVSVGDWL…LSSVQAMRTQ (65 aa)). The short motif at 984-986 (VPV) is the PDZ-binding element.

This sequence belongs to the protein kinase superfamily. Tyr protein kinase family. Ephrin receptor subfamily. Heterotetramer upon binding of the ligand. The heterotetramer is composed of an ephrin dimer and a receptor dimer. Oligomerization is probably required to induce biological responses. Interacts (phosphorylated at position Tyr-602) with FYN. Interacts (via PDZ motif) with SIPA1L1 (via PDZ domain); controls neuronal morphology through regulation of the RAP1 (RAP1A or RAP1B) and RAP2 (RAP2A, RAP2B or RAP2C) GTPases. Interacts with CDK5, CDK5R1 and NGEF; upon activation by EFNA1 induces NGEF phosphorylation by the kinase CDK5. Interacts with CHN1; effector of EPHA4 in axon guidance linking EPHA4 activation to RAC1 regulation. Forms a ternary complex composed of ADAM10, CADH1 and EPHA4; within the complex, CADH1 is cleaved by ADAM10 which disrupts adherens junctions. Expressed in inner and outer pillar cells of the organ of Corti (at protein level). Highest expression in the adult brain and retina and also detectable in kidney, lung, skeletal muscle and thymus. Not detected in heart and liver. Expressed in myogenic progenitor cells.

Its subcellular location is the cell membrane. It localises to the cell projection. It is found in the axon. The protein resides in the dendrite. The protein localises to the postsynaptic density membrane. Its subcellular location is the early endosome. It localises to the cell junction. It is found in the adherens junction. It carries out the reaction L-tyrosyl-[protein] + ATP = O-phospho-L-tyrosyl-[protein] + ADP + H(+). In terms of biological role, receptor tyrosine kinase which binds membrane-bound ephrin family ligands residing on adjacent cells, leading to contact-dependent bidirectional signaling into neighboring cells. The signaling pathway downstream of the receptor is referred to as forward signaling while the signaling pathway downstream of the ephrin ligand is referred to as reverse signaling. Highly promiscuous, it has the unique property among Eph receptors to bind and to be physiologically activated by both GPI-anchored ephrin-A and transmembrane ephrin-B ligands including EFNA1 and EFNB3. Upon activation by ephrin ligands, modulates cell morphology and integrin-dependent cell adhesion through regulation of the Rac, Rap and Rho GTPases activity. Plays an important role in the development of the nervous system controlling different steps of axonal guidance including the establishment of the corticospinal projections. May also control the segregation of motor and sensory axons during neuromuscular circuit developmen. In addition to its role in axonal guidance plays a role in synaptic plasticity. Activated by EFNA1 phosphorylates CDK5 at 'Tyr-15' which in turn phosphorylates NGEF regulating RHOA and dendritic spine morphogenesis. In the nervous system, also plays a role in repair after injury preventing axonal regeneration and in angiogenesis playing a role in central nervous system vascular formation. Additionally, its promiscuity makes it available to participate in a variety of cell-cell signaling regulating for instance the development of the thymic epithelium. During development of the cochlear organ of Corti, regulates pillar cell separation by forming a ternary complex with ADAM10 and CADH1 which facilitates the cleavage of CADH1 by ADAM10 and disruption of adherens junctions. Phosphorylates CAPRIN1, promoting CAPRIN1-dependent formation of a membraneless compartment. This is Ephrin type-A receptor 4 (Epha4) from Mus musculus (Mouse).